Here is a 312-residue protein sequence, read N- to C-terminus: Aspartate carbamoyltransferase catalytic subunit (312 aa).

Carbamoyl phosphate-binding residues include Arg-55 and Thr-56. Residue Lys-83 participates in L-aspartate binding. Carbamoyl phosphate is bound by residues Arg-105, His-138, and Gln-141. L-aspartate-binding residues include Arg-171 and Arg-225. Carbamoyl phosphate contacts are provided by Gly-266 and Pro-267.

Belongs to the aspartate/ornithine carbamoyltransferase superfamily. ATCase family. Heterododecamer (2C3:3R2) of six catalytic PyrB chains organized as two trimers (C3), and six regulatory PyrI chains organized as three dimers (R2).

The enzyme catalyses carbamoyl phosphate + L-aspartate = N-carbamoyl-L-aspartate + phosphate + H(+). It participates in pyrimidine metabolism; UMP biosynthesis via de novo pathway; (S)-dihydroorotate from bicarbonate: step 2/3. Functionally, catalyzes the condensation of carbamoyl phosphate and aspartate to form carbamoyl aspartate and inorganic phosphate, the committed step in the de novo pyrimidine nucleotide biosynthesis pathway. The polypeptide is Aspartate carbamoyltransferase catalytic subunit (Corynebacterium glutamicum (strain R)).